Reading from the N-terminus, the 569-residue chain is Proline--tRNA ligase (569 aa).

This sequence belongs to the class-II aminoacyl-tRNA synthetase family. ProS type 1 subfamily. As to quaternary structure, homodimer.

The protein resides in the cytoplasm. It catalyses the reaction tRNA(Pro) + L-proline + ATP = L-prolyl-tRNA(Pro) + AMP + diphosphate. Its function is as follows. Catalyzes the attachment of proline to tRNA(Pro) in a two-step reaction: proline is first activated by ATP to form Pro-AMP and then transferred to the acceptor end of tRNA(Pro). As ProRS can inadvertently accommodate and process non-cognate amino acids such as alanine and cysteine, to avoid such errors it has two additional distinct editing activities against alanine. One activity is designated as 'pretransfer' editing and involves the tRNA(Pro)-independent hydrolysis of activated Ala-AMP. The other activity is designated 'posttransfer' editing and involves deacylation of mischarged Ala-tRNA(Pro). The misacylated Cys-tRNA(Pro) is not edited by ProRS. This Colwellia psychrerythraea (strain 34H / ATCC BAA-681) (Vibrio psychroerythus) protein is Proline--tRNA ligase.